Here is a 232-residue protein sequence, read N- to C-terminus: Large ribosomal subunit protein uL1 (232 aa).

Belongs to the universal ribosomal protein uL1 family. As to quaternary structure, part of the 50S ribosomal subunit.

Functionally, binds directly to 23S rRNA. The L1 stalk is quite mobile in the ribosome, and is involved in E site tRNA release. In terms of biological role, protein L1 is also a translational repressor protein, it controls the translation of the L11 operon by binding to its mRNA. The protein is Large ribosomal subunit protein uL1 of Mesorhizobium japonicum (strain LMG 29417 / CECT 9101 / MAFF 303099) (Mesorhizobium loti (strain MAFF 303099)).